The following is a 1237-amino-acid chain: Putative structural protein VP3 (1237 aa).

Positions 963-1178 constitute a PPPDE domain; it reads GFLDKRVGDA…WDVSTAARMQ (216 aa). Active-site residues include His-1001 and Cys-1149.

Its subcellular location is the virion. The protein is Putative structural protein VP3 (S3) of Lymantria dispar cypovirus 1 (isolate Rao) (LdCPV-1).